Reading from the N-terminus, the 722-residue chain is Probable carboxypeptidase X1 (722 aa).

Positions Met-1–Gly-20 are cleaved as a signal peptide. The disordered stretch occupies residues Ala-30–Arg-54. The span at Ala-36–Asn-49 shows a compositional bias: polar residues. 4 N-linked (GlcNAc...) asparagine glycosylation sites follow: Asn-49, Asn-200, Asn-210, and Asn-307. Residues Pro-103–Cys-263 form the F5/8 type C domain. A disulfide bridge connects residues Cys-105 and Cys-263. One can recognise a Peptidase M14 domain in the interval Arg-287–Val-610. The Zn(2+) site is built by His-349 and Glu-352. Asn-461 carries an N-linked (GlcNAc...) asparagine glycan. His-487 is a binding site for Zn(2+). Glu-580 serves as the catalytic Proton donor/acceptor.

This sequence belongs to the peptidase M14 family. Zn(2+) serves as cofactor. As to expression, strongly expressed in testis and spleen. Moderately expressed in salivary gland, brain, heart, lung, and kidney. Extremely low expression in liver and muscle. No expression in eye, adrenal, and white adipose tissues.

The protein localises to the secreted. In terms of biological role, may be involved in cell-cell interactions. No carboxypeptidase activity was found yet. The protein is Probable carboxypeptidase X1 (Cpxm1) of Mus musculus (Mouse).